A 372-amino-acid chain; its full sequence is Putative glutamate--cysteine ligase 2 (372 aa).

Belongs to the glutamate--cysteine ligase type 2 family. YbdK subfamily. In terms of assembly, homodimer.

It catalyses the reaction L-cysteine + L-glutamate + ATP = gamma-L-glutamyl-L-cysteine + ADP + phosphate + H(+). In terms of biological role, ATP-dependent carboxylate-amine ligase which exhibits weak glutamate--cysteine ligase activity. This Salmonella paratyphi A (strain AKU_12601) protein is Putative glutamate--cysteine ligase 2 (ybdK).